A 307-amino-acid chain; its full sequence is Elongation factor Ts (307 aa).

An involved in Mg(2+) ion dislocation from EF-Tu region spans residues 80 to 83; sequence TDFV.

It belongs to the EF-Ts family.

It localises to the cytoplasm. In terms of biological role, associates with the EF-Tu.GDP complex and induces the exchange of GDP to GTP. It remains bound to the aminoacyl-tRNA.EF-Tu.GTP complex up to the GTP hydrolysis stage on the ribosome. In Clostridium botulinum (strain Kyoto / Type A2), this protein is Elongation factor Ts.